We begin with the raw amino-acid sequence, 177 residues long: Photosystem I assembly protein Ycf4 (177 aa).

The next 2 helical transmembrane spans lie at 20–40 (VALL…SSYF) and 60–80 (LVMG…WAVI).

This sequence belongs to the Ycf4 family.

It localises to the cellular thylakoid membrane. Seems to be required for the assembly of the photosystem I complex. The chain is Photosystem I assembly protein Ycf4 from Synechococcus sp. (strain RCC307).